Here is a 335-residue protein sequence, read N- to C-terminus: MDKKARAHTVIVCLVGALSLACAYLLGGSMKYLRGDVSRFWTSSRMQRHPAHSSQPVVRTFTDADGYTCLDQAHPHTIVIDATRVRVSVQVCAQRRSLAYKVVKNSVYDPLSIHLDPTMLVLRRGKKTVRESTPPADSPGVMQSALNVRDTLRDWFYTFWKNVWGSRWGHSVVPIEAIICVPAQHNVHNLKVRVKDSSLRLEGIEVRFADVYAHASELKLNGVRTDRTLLHTTDGDTQCSRCVLSDAHLYTDRGTLSFDGTLQGNSEIGTRTGTVVARFTERQSYYALSVFSGHGAVYINDQRVRKTLGTCLSTGGSAQLCVRNERGVLHVYFPQ.

The N-terminal stretch at 1 to 21 (MDKKARAHTVIVCLVGALSLA) is a signal peptide. Residue cysteine 22 is the site of N-palmitoyl cysteine attachment. Cysteine 22 carries the S-diacylglycerol cysteine lipid modification.

The protein localises to the cell membrane. This is an uncharacterized protein from Treponema pallidum (strain Nichols).